The primary structure comprises 327 residues: Undecaprenyl-phosphate 4-deoxy-4-formamido-L-arabinose transferase (327 aa).

Over 1-235 (MFDAAPIKKV…TCLTTTPLRL (235 aa)) the chain is Cytoplasmic. Residues 236–256 (LSLLGSVIAIGGFSLSVLLIV) traverse the membrane as a helical segment. Topologically, residues 257-269 (LRLALGPQWAAEG) are periplasmic. A helical membrane pass occupies residues 270 to 290 (VFMLFAVLFTFIGAQFIGMGL). At 291-327 (LGEYIGRIYNDVRARPRYFVQQVIYPESTSFTEESHQ) the chain is on the cytoplasmic side.

This sequence belongs to the glycosyltransferase 2 family.

It is found in the cell inner membrane. The enzyme catalyses UDP-4-deoxy-4-formamido-beta-L-arabinose + di-trans,octa-cis-undecaprenyl phosphate = 4-deoxy-4-formamido-alpha-L-arabinopyranosyl di-trans,octa-cis-undecaprenyl phosphate + UDP. It participates in glycolipid biosynthesis; 4-amino-4-deoxy-alpha-L-arabinose undecaprenyl phosphate biosynthesis; 4-amino-4-deoxy-alpha-L-arabinose undecaprenyl phosphate from UDP-4-deoxy-4-formamido-beta-L-arabinose and undecaprenyl phosphate: step 1/2. It functions in the pathway bacterial outer membrane biogenesis; lipopolysaccharide biosynthesis. Functionally, catalyzes the transfer of 4-deoxy-4-formamido-L-arabinose from UDP to undecaprenyl phosphate. The modified arabinose is attached to lipid A and is required for resistance to polymyxin and cationic antimicrobial peptides. This is Undecaprenyl-phosphate 4-deoxy-4-formamido-L-arabinose transferase from Salmonella paratyphi A (strain ATCC 9150 / SARB42).